The following is a 38-amino-acid chain: Anthranilate phosphoribosyltransferase (38 aa).

It belongs to the anthranilate phosphoribosyltransferase family. Homodimer.

It catalyses the reaction N-(5-phospho-beta-D-ribosyl)anthranilate + diphosphate = 5-phospho-alpha-D-ribose 1-diphosphate + anthranilate. Its pathway is amino-acid biosynthesis; L-tryptophan biosynthesis; L-tryptophan from chorismate: step 2/5. Catalyzes the transfer of the phosphoribosyl group of 5-phosphorylribose-1-pyrophosphate (PRPP) to anthranilate to yield N-(5'-phosphoribosyl)-anthranilate (PRA). In Serratia marcescens, this protein is Anthranilate phosphoribosyltransferase (trpD).